The following is a 337-amino-acid chain: MAAPRDNVTLLFKLYCLAVMTLMAAVYTIALRYTRTSDKELYFSTTAVCITEVIKLLLSVGILAKETGSLGRFKASLRENVLGSPKELLKLSVPSLVYAVQNNMAFLALSNLDAAVYQVTYQLKIPCTALCTVLMLNRTLSKLQWVSVFMLCAGVTLVQWKPAQATKVVVEQNPLLGFGAIAIAVLCSGFAGVYFEKVLKSSDTSLWVRNIQMYLSGIIVTLAGVYLSDGAEIKEKGFFYGYTYYVWFVIFLASVGGLYTSVVVKYTDNIMKGFSAAAAIVLSTIASVMLFGLQITLTFALGTLLVCVSIYLYGLPRQDTTSIQQGETASKERVIGV.

Residues 1 to 9 (MAAPRDNVT) are Cytoplasmic-facing. Residues 10–30 (LLFKLYCLAVMTLMAAVYTIA) form a helical membrane-spanning segment. Residues 31–45 (LRYTRTSDKELYFST) are Lumenal-facing. The helical transmembrane segment at 46 to 64 (TAVCITEVIKLLLSVGILA) threads the bilayer. Lys55 is a CMP-N-acetyl-beta-neuraminate binding site. The Cytoplasmic segment spans residues 65-87 (KETGSLGRFKASLRENVLGSPKE). Residues 88-108 (LLKLSVPSLVYAVQNNMAFLA) traverse the membrane as a helical segment. 101-102 (QN) contributes to the CMP-N-acetyl-beta-neuraminate binding site. At 109–114 (LSNLDA) the chain is on the lumenal side. Residues 115–135 (AVYQVTYQLKIPCTALCTVLM) form a helical membrane-spanning segment. Residue 117–124 (YQVTYQLK) participates in CMP-N-acetyl-beta-neuraminate binding. At 136-141 (LNRTLS) the chain is on the cytoplasmic side. The chain crosses the membrane as a helical span at residues 142-160 (KLQWVSVFMLCAGVTLVQW). Residues 161 to 175 (KPAQATKVVVEQNPL) are Lumenal-facing. The helical transmembrane segment at 176–196 (LGFGAIAIAVLCSGFAGVYFE) threads the bilayer. Ser188 lines the CMP-N-acetyl-beta-neuraminate pocket. Residues 197-209 (KVLKSSDTSLWVR) are Cytoplasmic-facing. Position 210–214 (210–214 (NIQMY)) interacts with CMP-N-acetyl-beta-neuraminate. Residues 210-228 (NIQMYLSGIIVTLAGVYLS) form a helical membrane-spanning segment. The Lumenal portion of the chain corresponds to 229–243 (DGAEIKEKGFFYGYT). Residues 244–262 (YYVWFVIFLASVGGLYTSV) form a helical membrane-spanning segment. The Cytoplasmic segment spans residues 263–269 (VVKYTDN). Residues 270–288 (IMKGFSAAAAIVLSTIASV) traverse the membrane as a helical segment. Position 272 (Lys272) interacts with CMP-N-acetyl-beta-neuraminate. Residues 289-296 (MLFGLQIT) lie on the Lumenal side of the membrane. A helical membrane pass occupies residues 297-315 (LTFALGTLLVCVSIYLYGL). Over 316 to 337 (PRQDTTSIQQGETASKERVIGV) the chain is Cytoplasmic. The interval 316 to 337 (PRQDTTSIQQGETASKERVIGV) is disordered.

It belongs to the nucleotide-sugar transporter family. SLC35A subfamily. As to quaternary structure, monomer.

It is found in the golgi apparatus membrane. Its subcellular location is the golgi apparatus. The enzyme catalyses CMP-N-acetyl-beta-neuraminate(in) + CMP(out) = CMP-N-acetyl-beta-neuraminate(out) + CMP(in). It catalyses the reaction CMP-N-acetyl-beta-neuraminate(in) + AMP(out) = CMP-N-acetyl-beta-neuraminate(out) + AMP(in). It carries out the reaction CDP-L-ribitol(in) + CDP(out) = CDP-L-ribitol(out) + CDP(in). The catalysed reaction is UMP(out) + CMP-N-acetyl-beta-neuraminate(in) = UMP(in) + CMP-N-acetyl-beta-neuraminate(out). Functionally, transports CMP-sialic acid from the cytosol into the Golgi apparatus, functioning as an antiporter that exchanges CMP-sialic acid for CMP. Binds both CMP-sialic acid and free CMP, but has higher affinity for free CMP. Also able to exchange CMP-sialic acid for AMP and UMP. Also mediates the transport of CDP-ribitol. The sequence is that of CMP-sialic acid transporter from Homo sapiens (Human).